Consider the following 132-residue polypeptide: uncharacterized protein (132 aa).

A signal peptide spans 1–35 (MSFEYRHYKREAKICTCRGGWAHVLLCIGVSQGAC). A disordered region spans residues 91-132 (AHPGSHSDQPPGVPSRRKSRLERWSPSVSRSTSPPTEAPFCL). A compositionally biased stretch (low complexity) spans 115-125 (SPSVSRSTSPP).

The protein localises to the secreted. This is an uncharacterized protein from Homo sapiens (Human).